Consider the following 918-residue polypeptide: Sarcosine dehydrogenase, mitochondrial (918 aa).

The span at 1–13 shows a compositional bias: low complexity; it reads MASLSRALRVAAA. The N-terminal 22 residues, 1-22, are a transit peptide targeting the mitochondrion; sequence MASLSRALRVAAAHPRQSPTRG. Residues 1-40 form a disordered region; that stretch reads MASLSRALRVAAAHPRQSPTRGMGPCNLSSAAGPTAEKSV. Lys38 is subject to N6-succinyllysine. His108 is subject to Tele-8alpha-FAD histidine. Position 173 is an N6-acetyllysine; alternate (Lys173). Position 173 is an N6-succinyllysine; alternate (Lys173). An N6-succinyllysine mark is found at Lys377 and Lys391. An N6-acetyllysine mark is found at Lys559 and Lys775. The residue at position 777 (Tyr777) is a Phosphotyrosine. Lys802, Lys884, and Lys904 each carry N6-acetyllysine; alternate. N6-succinyllysine; alternate occurs at positions 802, 884, and 904.

This sequence belongs to the GcvT family. FAD is required as a cofactor. As to expression, expressed in pancreas, liver and kidney.

Its subcellular location is the mitochondrion matrix. The enzyme catalyses (6S)-5,6,7,8-tetrahydrofolyl-(gamma-L-Glu)(n) + sarcosine + oxidized [electron-transfer flavoprotein] + H(+) = (6R)-5,10-methylenetetrahydrofolyl-(gamma-L-Glu)(n) + reduced [electron-transfer flavoprotein] + glycine. It functions in the pathway amine and polyamine degradation; sarcosine degradation; formaldehyde and glycine from sarcosine: step 1/1. Its function is as follows. Catalyzes the last step of the oxidative degradation of choline to glycine. Converts sarcosine into glycine. The protein is Sarcosine dehydrogenase, mitochondrial of Homo sapiens (Human).